Here is a 122-residue protein sequence, read N- to C-terminus: ATP synthase epsilon chain (122 aa).

This sequence belongs to the ATPase epsilon chain family. As to quaternary structure, F-type ATPases have 2 components, CF(1) - the catalytic core - and CF(0) - the membrane proton channel. CF(1) has five subunits: alpha(3), beta(3), gamma(1), delta(1), epsilon(1). CF(0) has three main subunits: a, b and c.

It is found in the cell membrane. In terms of biological role, produces ATP from ADP in the presence of a proton gradient across the membrane. The protein is ATP synthase epsilon chain of Rhodococcus erythropolis (strain PR4 / NBRC 100887).